A 269-amino-acid chain; its full sequence is Zinc transporter ZupT (269 aa).

The next 8 membrane-spanning stretches (helical) occupy residues 12–32 (AFSI…LVMF), 41–61 (LSFG…TEIF), 75–95 (DHAF…IALI), 126–146 (MMAA…TFFA), 152–172 (AVGM…GISI), 187–207 (VWAC…GYLV), 211–231 (FLSP…MVFL), and 249–269 (TVYG…LFHF). The Fe(2+) site is built by asparagine 136 and glutamate 139. Residues glutamate 139 and histidine 164 each coordinate Zn(2+). Fe(2+) contacts are provided by asparagine 165, glutamate 168, and glutamate 197. Glutamate 168 lines the Zn(2+) pocket.

This sequence belongs to the ZIP transporter (TC 2.A.5) family. ZupT subfamily.

Its subcellular location is the cell inner membrane. It carries out the reaction Zn(2+)(in) = Zn(2+)(out). Its function is as follows. Mediates zinc uptake. May also transport other divalent cations. This Neisseria meningitidis serogroup B (strain ATCC BAA-335 / MC58) protein is Zinc transporter ZupT.